A 67-amino-acid chain; its full sequence is DNA-directed RNA polymerase subunit omega (67 aa).

It belongs to the RNA polymerase subunit omega family. In terms of assembly, the RNAP catalytic core consists of 2 alpha, 1 beta, 1 beta' and 1 omega subunit. When a sigma factor is associated with the core the holoenzyme is formed, which can initiate transcription.

The enzyme catalyses RNA(n) + a ribonucleoside 5'-triphosphate = RNA(n+1) + diphosphate. Its function is as follows. Promotes RNA polymerase assembly. Latches the N- and C-terminal regions of the beta' subunit thereby facilitating its interaction with the beta and alpha subunits. This chain is DNA-directed RNA polymerase subunit omega, found in Legionella pneumophila (strain Paris).